An 89-amino-acid polypeptide reads, in one-letter code: Small ribosomal subunit protein uS15 (89 aa).

The protein belongs to the universal ribosomal protein uS15 family. As to quaternary structure, part of the 30S ribosomal subunit. Forms a bridge to the 50S subunit in the 70S ribosome, contacting the 23S rRNA.

Functionally, one of the primary rRNA binding proteins, it binds directly to 16S rRNA where it helps nucleate assembly of the platform of the 30S subunit by binding and bridging several RNA helices of the 16S rRNA. Its function is as follows. Forms an intersubunit bridge (bridge B4) with the 23S rRNA of the 50S subunit in the ribosome. The polypeptide is Small ribosomal subunit protein uS15 (Tolumonas auensis (strain DSM 9187 / NBRC 110442 / TA 4)).